A 165-amino-acid polypeptide reads, in one-letter code: Phosphopantetheine adenylyltransferase (165 aa).

S10 provides a ligand contact to substrate. ATP contacts are provided by residues S10–F11 and H18. Substrate contacts are provided by K42, T79, and R93. ATP-binding positions include G94 to R96, E104, and V129 to T135.

Belongs to the bacterial CoaD family. As to quaternary structure, homohexamer. Mg(2+) serves as cofactor.

The protein localises to the cytoplasm. It catalyses the reaction (R)-4'-phosphopantetheine + ATP + H(+) = 3'-dephospho-CoA + diphosphate. Its pathway is cofactor biosynthesis; coenzyme A biosynthesis; CoA from (R)-pantothenate: step 4/5. Its function is as follows. Reversibly transfers an adenylyl group from ATP to 4'-phosphopantetheine, yielding dephospho-CoA (dPCoA) and pyrophosphate. This is Phosphopantetheine adenylyltransferase from Afipia carboxidovorans (strain ATCC 49405 / DSM 1227 / KCTC 32145 / OM5) (Oligotropha carboxidovorans).